The primary structure comprises 375 residues: 23S rRNA (uracil(747)-C(5))-methyltransferase RlmC (375 aa).

[4Fe-4S] cluster-binding residues include Cys3, Cys11, Cys14, and Cys87. S-adenosyl-L-methionine is bound by residues Gln212, Phe241, Glu262, and Asn307. Residue Cys334 is the Nucleophile of the active site.

The protein belongs to the class I-like SAM-binding methyltransferase superfamily. RNA M5U methyltransferase family. RlmC subfamily.

It catalyses the reaction uridine(747) in 23S rRNA + S-adenosyl-L-methionine = 5-methyluridine(747) in 23S rRNA + S-adenosyl-L-homocysteine + H(+). Functionally, catalyzes the formation of 5-methyl-uridine at position 747 (m5U747) in 23S rRNA. The sequence is that of 23S rRNA (uracil(747)-C(5))-methyltransferase RlmC from Salmonella enteritidis PT4 (strain P125109).